Consider the following 344-residue polypeptide: Hyoscyamine 6-dioxygenase (344 aa).

One can recognise a Fe2OG dioxygenase domain in the interval 193 to 293; it reads QIQMMLTNYY…RVSIATLIGP (101 aa). Fe cation is bound by residues H217, D219, and H274. Residue R284 participates in 2-oxoglutarate binding.

The protein belongs to the iron/ascorbate-dependent oxidoreductase family. In terms of assembly, monomer. Requires Fe(2+) as cofactor. L-ascorbate is required as a cofactor. In terms of processing, the N-terminus is blocked. Root.

It carries out the reaction L-hyoscyamine + 2-oxoglutarate + O2 = (6S)-6-hydroxyhyoscyamine + succinate + CO2. Its pathway is alkaloid biosynthesis; scopolamine biosynthesis. In Hyoscyamus niger (Black henbane), this protein is Hyoscyamine 6-dioxygenase (H6H).